The chain runs to 2325 residues: Protein Ycf2 (2325 aa).

3 disordered regions span residues 168 to 189 (SSQL…GTED), 221 to 251 (TEIE…EMNN), and 947 to 1006 (KRKK…KRKE). The span at 230-240 (KGLSGSSSKSR) shows a compositional bias: low complexity. Composition is skewed to basic and acidic residues over residues 241–250 (LFTEGEKEMN) and 955–1004 (KRKE…PEKR). 1436-1443 (GSIGSGRS) is an ATP binding site. Disordered stretches follow at residues 1510–1529 (YEDR…DYEP), 1855–1996 (LVGS…LLRP), and 2063–2179 (PAEE…DGFS). Positions 1861-1976 (TEEEVEGTEE…VEGTEDEEGE (116 aa)) are enriched in acidic residues. Residues 1977 to 1989 (GTEKDSSQFDNDR) are compositionally biased toward basic and acidic residues. Composition is skewed to acidic residues over residues 2063–2080 (PAEE…EALE) and 2087–2162 (GEEE…ENDS).

It belongs to the Ycf2 family.

It localises to the plastid. The protein localises to the chloroplast stroma. Its function is as follows. Probable ATPase of unknown function. Its presence in a non-photosynthetic plant (Epifagus virginiana) and experiments in tobacco indicate that it has an essential function which is probably not related to photosynthesis. The protein is Protein Ycf2 of Oenothera biennis (German evening primrose).